We begin with the raw amino-acid sequence, 68 residues long: Sec-independent protein translocase protein TatA (68 aa).

A helical membrane pass occupies residues Met-1–Gly-21. The interval Glu-46 to Arg-68 is disordered. Residues Lys-53 to Arg-68 are compositionally biased toward basic and acidic residues.

The protein belongs to the TatA/E family. As to quaternary structure, the Tat system comprises two distinct complexes: a TatABC complex, containing multiple copies of TatA, TatB and TatC subunits, and a separate TatA complex, containing only TatA subunits. Substrates initially bind to the TatABC complex, which probably triggers association of the separate TatA complex to form the active translocon.

The protein resides in the cell inner membrane. In terms of biological role, part of the twin-arginine translocation (Tat) system that transports large folded proteins containing a characteristic twin-arginine motif in their signal peptide across membranes. TatA could form the protein-conducting channel of the Tat system. The polypeptide is Sec-independent protein translocase protein TatA (Sinorhizobium fredii (strain NBRC 101917 / NGR234)).